A 146-amino-acid chain; its full sequence is uncharacterized protein (146 aa).

Disordered stretches follow at residues 1-33 (MATF…GSYR) and 50-70 (QHWR…SWEG).

This is an uncharacterized protein from Homo sapiens (Human).